Consider the following 146-residue polypeptide: Large ribosomal subunit protein uL15 (146 aa).

Positions 1 to 10 (MKLHELKPAE) are enriched in basic and acidic residues. Residues 1–51 (MKLHELKPAEGSRQVRNRVGRGTSSGNGKTAGRGQKGQKARSGGGVRLGFE) form a disordered region. Composition is skewed to gly residues over residues 23 to 35 (TSSG…GRGQ) and 42 to 51 (SGGGVRLGFE).

Belongs to the universal ribosomal protein uL15 family. Part of the 50S ribosomal subunit.

Functionally, binds to the 23S rRNA. The chain is Large ribosomal subunit protein uL15 from Enterococcus faecalis (strain ATCC 700802 / V583).